A 3799-amino-acid polypeptide reads, in one-letter code: Polyketide synthase GfsE (3799 aa).

Residues 33-459 (HEPIAIIGMS…GTNAHAILEE (427 aa)) form the Ketosynthase family 3 (KS3) 1 domain. 2 module regions span residues 33-1730 (HEPI…RSSA) and 1749-3494 (DEAI…RTDL). Active-site for beta-ketoacyl synthase 1 activity residues include cysteine 206, histidine 341, and histidine 381. Residues 462–496 (AATGNPTEADTDQEPAASASPDRTTTLPAVPWPLS) are disordered. The region spanning 582-895 (FVFPGQGSQW…LGEAHAHGAD (314 aa)) is the Malonyl-CoA:ACP transacylase (MAT) 1 domain. The segment at 944–1069 (HPLFGAVVEV…GVLELEARPE (126 aa)) is N-terminal hotdog fold 1. Positions 944-1222 (HPLFGAVVEV…SRPVAEEQLG (279 aa)) constitute a PKS/mFAS DH 1 domain. The active-site Proton acceptor; for dehydratase activity 1 is the histidine 976. Residues 1081–1222 (AEVVPVEGLY…SRPVAEEQLG (142 aa)) form a C-terminal hotdog fold 1 region. Catalysis depends on aspartate 1142, which acts as the Proton donor; for dehydratase activity 1. One can recognise a Ketoreductase (KR) 1 domain in the interval 1382–1554 (LLVTGASGVL…TSLSWGLWAE (173 aa)). The Carrier 1 domain occupies 1652-1730 (EAERAVLELV…ALATHIRSSA (79 aa)). Serine 1690 carries the O-(pantetheine 4'-phosphoryl)serine modification. The 426-residue stretch at 1749–2174 (DEAIAIVGMA…GTNAHVILEQ (426 aa)) folds into the Ketosynthase family 3 (KS3) 2 domain. Residues cysteine 1921, histidine 2056, and histidine 2096 each act as for beta-ketoacyl synthase 2 activity in the active site. Positions 2284–2604 (FVFPGQGSQW…VSLAKVHTHG (321 aa)) constitute a Malonyl-CoA:ACP transacylase (MAT) 2 domain. Residues 2656 to 2781 (HPLLTGVVDL…GTLAVDADHD (126 aa)) form an N-terminal hotdog fold 2 region. One can recognise a PKS/mFAS DH 2 domain in the interval 2656–2936 (HPLLTGVVDL…TRPVTAAQFA (281 aa)). Histidine 2688 acts as the Proton acceptor; for dehydratase activity 2 in catalysis. The interval 2794 to 2936 (ADPVDLTEVY…TRPVTAAQFA (143 aa)) is C-terminal hotdog fold 2. Aspartate 2855 acts as the Proton donor; for dehydratase activity 2 in catalysis. Positions 3142–3314 (LLVTGASGVL…TALSWGLWAE (173 aa)) constitute a Ketoreductase (KR) 2 domain. The Carrier 2 domain maps to 3419 to 3494 (AALLDLVGAQ…ALAAQLRTDL (76 aa)). O-(pantetheine 4'-phosphoryl)serine is present on serine 3454.

Pantetheine 4'-phosphate is required as a cofactor.

It participates in antibiotic biosynthesis. Fifth protein in the synthesis of the 16-membered macrolide antibiotics FD-891 and FD-892. Composed of 2 modules. Modifies the product of GfsD by multiple rounds of addition of methylmalonyl-CoA and other modifications to help generate the final products. This chain is Polyketide synthase GfsE, found in Streptomyces halstedii.